An 845-amino-acid chain; its full sequence is Protein arginine N-methyltransferase 9 (845 aa).

TPR repeat units lie at residues 25–58, 67–100, and 101–134; these read VSRSLQSAEHCLGVQDFGTAYAHYLLVLSLAPEL, QYTLFRWAEELDALSRIQDLLGCYEQALELFPDD, and EVICNSMGEHLFRMGFRDEAAGYFHKAVKLNPDF. SAM-dependent MTase PRMT-type domains follow at residues 137–466 and 530–845; these read AKEN…YLRI and NIPY…TVKQ.

The protein belongs to the class I-like SAM-binding methyltransferase superfamily. Protein arginine N-methyltransferase family. As to quaternary structure, found in a complex with PRMT9, SF3B2 and SF3B4. Interacts with SF3B2.

The protein localises to the cytoplasm. It carries out the reaction L-arginyl-[protein] + 2 S-adenosyl-L-methionine = N(omega),N(omega)'-dimethyl-L-arginyl-[protein] + 2 S-adenosyl-L-homocysteine + 2 H(+). Functionally, arginine methyltransferase that can both catalyze the formation of omega-N monomethylarginine (MMA) and symmetrical dimethylarginine (sDMA). Specifically mediates the symmetrical dimethylation of SF3B2. Involved in the regulation of alternative splicing of pre-mRNA. The chain is Protein arginine N-methyltransferase 9 from Homo sapiens (Human).